Reading from the N-terminus, the 436-residue chain is Ribulose bisphosphate carboxylase large chain (436 aa).

Substrate contacts are provided by N104 and T154. K156 serves as the catalytic Proton acceptor. K158 serves as a coordination point for substrate. Mg(2+)-binding residues include K182, D184, and E185. The residue at position 182 (K182) is an N6-carboxylysine. H275 functions as the Proton acceptor in the catalytic mechanism. 3 residues coordinate substrate: R276, H308, and S360.

It belongs to the RuBisCO large chain family. Type I subfamily. In terms of assembly, heterohexadecamer of 8 large chains and 8 small chains. The cofactor is Mg(2+).

The protein localises to the plastid. Its subcellular location is the chloroplast. The catalysed reaction is 2 (2R)-3-phosphoglycerate + 2 H(+) = D-ribulose 1,5-bisphosphate + CO2 + H2O. It carries out the reaction D-ribulose 1,5-bisphosphate + O2 = 2-phosphoglycolate + (2R)-3-phosphoglycerate + 2 H(+). In terms of biological role, ruBisCO catalyzes two reactions: the carboxylation of D-ribulose 1,5-bisphosphate, the primary event in carbon dioxide fixation, as well as the oxidative fragmentation of the pentose substrate in the photorespiration process. Both reactions occur simultaneously and in competition at the same active site. The polypeptide is Ribulose bisphosphate carboxylase large chain (Euglena myxocylindracea).